Consider the following 152-residue polypeptide: Protein D1 (152 aa).

Belongs to the phosphatidylethanolamine-binding protein family.

The polypeptide is Protein D1 (D1) (Onchocerca volvulus).